Consider the following 38-residue polypeptide: Kunitz-type trypsin inhibitor beta chain (38 aa).

This sequence belongs to the protease inhibitor I3 (leguminous Kunitz-type inhibitor) family. Heterodimer of an alpha and a beta chain linked by a disulfide bond.

In terms of biological role, inhibition of trypsin. The chain is Kunitz-type trypsin inhibitor beta chain from Neltuma juliflora (Mesquite).